The chain runs to 346 residues: UPF0283 membrane protein VIBHAR_01918 (346 aa).

Over residues 1–17 (MSELKQKQVFKEKVMHS) the composition is skewed to basic and acidic residues. The segment at 1–28 (MSELKQKQVFKEKVMHSEEEDVSPELNT) is disordered. A run of 2 helical transmembrane segments spans residues 73–93 (LFAT…ITAI) and 98–118 (WLAL…LGAL).

This sequence belongs to the UPF0283 family.

The protein resides in the cell inner membrane. The sequence is that of UPF0283 membrane protein VIBHAR_01918 from Vibrio campbellii (strain ATCC BAA-1116).